The primary structure comprises 59 residues: Large ribosomal subunit protein uL30 (59 aa).

Belongs to the universal ribosomal protein uL30 family. Part of the 50S ribosomal subunit.

The sequence is that of Large ribosomal subunit protein uL30 from Citrifermentans bemidjiense (strain ATCC BAA-1014 / DSM 16622 / JCM 12645 / Bem) (Geobacter bemidjiensis).